A 71-amino-acid polypeptide reads, in one-letter code: Small ribosomal subunit protein bS21 (71 aa).

The segment covering 48–59 (KAAAAVKRHAKK) has biased composition (basic residues). The segment at 48–71 (KAAAAVKRHAKKVQRENRKFQRLY) is disordered. Positions 60–71 (VQRENRKFQRLY) are enriched in basic and acidic residues.

It belongs to the bacterial ribosomal protein bS21 family.

The sequence is that of Small ribosomal subunit protein bS21 from Saccharophagus degradans (strain 2-40 / ATCC 43961 / DSM 17024).